A 365-amino-acid polypeptide reads, in one-letter code: Chorismate synthase (365 aa).

R47 provides a ligand contact to NADP(+). FMN contacts are provided by residues 124 to 126 (RAS), G287, 302 to 306 (KPTAT), and R328.

This sequence belongs to the chorismate synthase family. Homotetramer. FMNH2 is required as a cofactor.

The enzyme catalyses 5-O-(1-carboxyvinyl)-3-phosphoshikimate = chorismate + phosphate. The protein operates within metabolic intermediate biosynthesis; chorismate biosynthesis; chorismate from D-erythrose 4-phosphate and phosphoenolpyruvate: step 7/7. In terms of biological role, catalyzes the anti-1,4-elimination of the C-3 phosphate and the C-6 proR hydrogen from 5-enolpyruvylshikimate-3-phosphate (EPSP) to yield chorismate, which is the branch point compound that serves as the starting substrate for the three terminal pathways of aromatic amino acid biosynthesis. This reaction introduces a second double bond into the aromatic ring system. The protein is Chorismate synthase of Prochlorococcus marinus (strain MIT 9215).